We begin with the raw amino-acid sequence, 103 residues long: Large ribosomal subunit protein bL21 (103 aa).

The protein belongs to the bacterial ribosomal protein bL21 family. Part of the 50S ribosomal subunit. Contacts protein L20.

Functionally, this protein binds to 23S rRNA in the presence of protein L20. The protein is Large ribosomal subunit protein bL21 of Thermobifida fusca (strain YX).